The primary structure comprises 458 residues: MKSNFSKFKDFIKYKKVAVVGIGVSNRPLIKFLVKLGAKVTAFDKKHREKLGSISLELEEIGVDLVLGENYLDKLDGYDVIFKTPSMRIDRPEFVKAKESGAYITSEMEEFIKYCPAKVFGITGSDGKTTTTTLVYEMLKKEGYRTWVGGNIGTPLFANIEEMKEDHMVVLELSSFQLMTMDVSPEISLITNLSPNHLDVHKDFEEYVWAKKNIFKYQSSNNLLVLNKDDDLTNEMENEALGDVLKFSLVEKVYNGACLSNNKLTIQGKEVCDSKDINLKGRHNIANLLAAFCMVNKYVSIDSMKYVATNFSGVEHRCEFIREVNGVKYYNDSIASSPSRTLAGLNSFEKPVILIAGGYDKKIPFEPLAEGGYDKIKILILMGDTKNKIKSAFEKVISHKKCEMEIVIVNSMEEAVKVADNIAEKGDIITLSPACASFDMYPNFEIRGNEFKNIVNRL.

124–130 is an ATP binding site; it reads GSDGKTT.

It belongs to the MurCDEF family.

The protein resides in the cytoplasm. The catalysed reaction is UDP-N-acetyl-alpha-D-muramoyl-L-alanine + D-glutamate + ATP = UDP-N-acetyl-alpha-D-muramoyl-L-alanyl-D-glutamate + ADP + phosphate + H(+). The protein operates within cell wall biogenesis; peptidoglycan biosynthesis. Its function is as follows. Cell wall formation. Catalyzes the addition of glutamate to the nucleotide precursor UDP-N-acetylmuramoyl-L-alanine (UMA). The polypeptide is UDP-N-acetylmuramoylalanine--D-glutamate ligase (Clostridium botulinum (strain Langeland / NCTC 10281 / Type F)).